The sequence spans 681 residues: Cryptochrome-1 (681 aa).

Positions 1–489 are CNT1, binds chromophores to sense blue light and mediate CRY dimerization; the sequence is MSGSVSGCGS…AKARLHEALS (489 aa). Positions 12-141 constitute a Photolyase/cryptochrome alpha/beta domain; the sequence is GCSIVWFRRD…AVRSFNADLL (130 aa). Cysteines 80 and 190 form a disulfide. Position 235 (tyrosine 235) interacts with FAD. Asparagine 238 serves as a coordination point for Mg(2+). Arginine 239 is an ATP binding site. The Mg(2+) site is built by lysine 241, serine 244, and threonine 246. FAD-binding positions include 247-251 and serine 293; that span reads TSFLS. Histidine 358 provides a ligand contact to Mg(2+). FAD-binding positions include aspartate 359 and 390 to 392; that span reads DAD. ATP is bound at residue 359–360; the sequence is DR. An ATP-binding site is contributed by aspartate 409. The segment at 490-681 is CCT1/CCE1, mediates blue light signaling; sequence QMWQLEAASR…LNWRRLSQTG (192 aa). Disordered stretches follow at residues 525-598 and 616-664; these read RDIT…EPAS and STED…TSSY. A compositionally biased stretch (polar residues) spans 583 to 598; sequence MVNTNQAQQRRAEPAS. Serine 616 is subject to Phosphoserine. At threonine 621 the chain carries Phosphothreonine.

This sequence belongs to the DNA photolyase class-1 family. As to quaternary structure, homodimer. Interacts with ADO1, COP1 and PHYA. Interacts specifically with the dark/far-red (Pr) state of PHYB, but not with the red light-activated (Pfr). Interacts with PIF4 and PIF5 in the nucleus in response to low blue light (LBL). Binds to SPA1 and SPA4 in response to blue light, this interaction prevents SPA1/COP1 complex formation and thus avoid COP1-dependent degradation of the transcription factor HY5 by the proteasome and promotes hypocotyl elongation. Interacts with TCP2. Binding to ATP mediates conformational changes which facilitate flavin binding. Requires FAD as cofactor. The cofactor is (6R)-5,10-methylene-5,6,7,8-tetrahydrofolate. In terms of processing, autophosphorylated; in response to blue light and when in complex with FAD cofactor. Kinase activity is optimal in the presence of magnesium ions, about 30 percent of the optimal activity in the presence of manganese ions, but inactive with calcium ions. Adopts an open conformation when phosphorylated upon photoexcitation and thus interacts with signaling partner proteins. In terms of tissue distribution, widely expressed. Expressed in the aerial tissues (e.g. cotyledons and leaf primordia), but not detected in the roots.

Its subcellular location is the cytoplasm. The protein localises to the nucleus. It is found in the PML body. With respect to regulation, light exposure induces a conformational change in the C-terminal domain CCT1 required for activity. Functionally, photoreceptor that mediates primarily blue light inhibition of hypocotyl elongation and photoperiodic control of floral initiation, and regulates other light responses, including circadian rhythms, tropic growth, stomata opening, guard cell development, root development, bacterial and viral pathogen responses, abiotic stress responses, cell cycles, programmed cell death, apical dominance, fruit and ovule development, seed dormancy, and magnetoreception. Photoexcited cryptochromes interact with signaling partner proteins to alter gene expression at both transcriptional and post-translational levels and, consequently, regulate the corresponding metabolic and developmental programs. Blue-light absorbing flavoprotein that activates reversible flavin photoreduction via an electron transport chain comprising a tryptophan triad (W-324, W-377 and W-400), accompanied by a large conformational change upon photoexcitation, or via an alternative electron transport that involves small metabolites, including NADPH, NADH, and ATP. The half-life of the activated signaling state is about 5 minutes. Also involved in the detection of blue/green ratio in light (shade under leaf canopies) and subsequent adaptations on plant growth and development. In darkness, the dark reoxidation of flavin occurs and leads to inactivated state. Perceives low blue light (LBL) and responds by directly contacting two bHLH transcription factors, PIF4 and PIF5, at chromatin on E-box variant 5'-CA[CT]GTG-3' to promote their activity and stimulate specific gene expression to adapt global physiology (e.g. hypocotyl elongation and hyponastic growth in low blue light). When activated by high-intensity blue light, catalyzes direct enzymatic conversion of molecular oxygen O(2) to reactive oxygen species (ROS) and hydrogen peroxide H(2)O(2) in vitro. ROS accumulation upon activation by blue light leads to cell death in protoplasts. Seems essential for blue-light-triggered and singlet oxygen-mediated programmed cell death (PCD). Required for the induction of nuclear genes encoding photoprotective components by GATA24 and GATA28 in extreme light intensities that exceed the electron utilization capacity of the chloroplast. Involved in shortening the circadian clock period, especially at 27 degrees Celsius, in blue light (BL) and required to maintain clock genes expression rhythm. Mediates blue light-induced gene expression and hypocotyl elongation through the inhibition of COP1-mediated degradation of the transcription factors BIT1 and HY5 and via the activation of anion channels at the plasma membrane, probably via auxin signaling. Required for the hypocotyl hook formation in darkness. Involved in blue light-dependent stomatal opening, CHS gene expression, transpiration, inhibition of stem growth and increase of root growth, probably by regulating abscisic acid (ABA). Prevents lateral roots growth by inhibiting auxin transport. Necessary for shade avoidance syndrome (SAS), characterized by leaf hyponasty and reduced lamina/petiole ratio, when exposed to blue light attenuation. Together with phototropins, involved in phototropism regulation by various blue light fluence; blue light attenuates phototropism in high fluence rates (100 umol.m-2.s-1) but enhances phototropism in low fluence rates (&lt;1.0 umol.m-2.s-1). Required for blue/UV-A wavelengths-mediated inhibition of explants shoot regeneration in vitro (e.g. new shoot apical meristems regeneration from excised cotyledons). Modulates anthocyanin accumulation in a PHYA-dependent manner in far-red-light. Acts as a PHYA/PHYB-dependent modulator of chlorophyll accumulation in red light. Contributes to most blue light deetiolation responses. May act as a chemical magnetoreceptor, via magnetically sensitive kinetics and quantum yields of photo-induced flavin / tryptophan radical pairs. The effect of near-null magnetic field on flowering is altered by changes of blue light cycle and intensity in a CRY1/CRY2-dependent manner. Involved in the strigolactone signaling that regulates hypocotyl growth in response to blue light. Modulates temperature-dependent growth and physiology maintenance, especially at warm ambient temperatures (e.g. 27 degrees Celsius) and in white light and low-light conditions, via HFR1-dependent activity; this process requires PTAC12/HMR/PAP5 (transcriptional transactivator). In terms of biological role, implicated in promoting R protein-mediated resistance to Pseudomonas syringae pv. tomato (Pst.) DC3000 under continuous light conditions. Promotes systemic acquired resistance (SAR) and PR gene expression triggered by P.syringae. The polypeptide is Cryptochrome-1 (Arabidopsis thaliana (Mouse-ear cress)).